Here is a 362-residue protein sequence, read N- to C-terminus: Histidinol-phosphate aminotransferase 1 (362 aa).

K226 is modified (N6-(pyridoxal phosphate)lysine).

This sequence belongs to the class-II pyridoxal-phosphate-dependent aminotransferase family. Histidinol-phosphate aminotransferase subfamily. In terms of assembly, homodimer. Pyridoxal 5'-phosphate serves as cofactor.

It carries out the reaction L-histidinol phosphate + 2-oxoglutarate = 3-(imidazol-4-yl)-2-oxopropyl phosphate + L-glutamate. The protein operates within amino-acid biosynthesis; L-histidine biosynthesis; L-histidine from 5-phospho-alpha-D-ribose 1-diphosphate: step 7/9. The protein is Histidinol-phosphate aminotransferase 1 of Dechloromonas aromatica (strain RCB).